The following is a 212-amino-acid chain: tRNA (guanine-N(7)-)-methyltransferase (212 aa).

The S-adenosyl-L-methionine site is built by glutamate 44, aspartate 69, aspartate 96, and aspartate 118. Residue aspartate 118 is part of the active site. A substrate-binding site is contributed by lysine 122. Positions 124–129 (RHEKRR) are interaction with RNA. Substrate is bound by residues aspartate 154 and 191-194 (TEYE).

The protein belongs to the class I-like SAM-binding methyltransferase superfamily. TrmB family.

It carries out the reaction guanosine(46) in tRNA + S-adenosyl-L-methionine = N(7)-methylguanosine(46) in tRNA + S-adenosyl-L-homocysteine. Its pathway is tRNA modification; N(7)-methylguanine-tRNA biosynthesis. Its function is as follows. Catalyzes the formation of N(7)-methylguanine at position 46 (m7G46) in tRNA. This is tRNA (guanine-N(7)-)-methyltransferase from Streptococcus gordonii (strain Challis / ATCC 35105 / BCRC 15272 / CH1 / DL1 / V288).